A 339-amino-acid chain; its full sequence is MSKKIVVAMSGGVDSSYTANLLQSRGYEVIGVYMKFHPREEYHQKNIANIQKVAKHLGIEYHVLDRTKEFQERVYQPFVDSYVAGLTPNPCAMCNRVMKFTELIEFADELGVDNVATGHYAKTDGQFIYEATDKSKDQSYFLFNLKKEFLPRIIFPLGDWYKENVKKEAMKILLLKSIAEQKESSEICFVETNYIDVLKEHTEVEMPGEVVDTHGKVIGEHKGYMHYTIGKRKGFRLFKAHQPHYVLDIIPHKNRIVVGTKEQLEKRQIVLRGLNMFLDQKEFDCYIKIRYRTHKVPCHVKIDGSVASVTLKEPVYGVAKGQAGVFYDEEKVLGGGWIV.

ATP is bound by residues 8-15 (AMSGGVDS) and Met34. Cys94 serves as the catalytic Nucleophile. Cys94 and Cys188 are joined by a disulfide. Gly118 serves as a coordination point for ATP. An interaction with tRNA region spans residues 136 to 138 (KDQ). Cys188 (cysteine persulfide intermediate) is an active-site residue. An interaction with tRNA region spans residues 290–291 (RY).

Belongs to the MnmA/TRMU family.

The protein resides in the cytoplasm. It carries out the reaction S-sulfanyl-L-cysteinyl-[protein] + uridine(34) in tRNA + AH2 + ATP = 2-thiouridine(34) in tRNA + L-cysteinyl-[protein] + A + AMP + diphosphate + H(+). Functionally, catalyzes the 2-thiolation of uridine at the wobble position (U34) of tRNA, leading to the formation of s(2)U34. The polypeptide is tRNA-specific 2-thiouridylase MnmA (Nitratiruptor sp. (strain SB155-2)).